Reading from the N-terminus, the 290-residue chain is Phosphatidylserine decarboxylase proenzyme (290 aa).

Active-site charge relay system; for autoendoproteolytic cleavage activity residues include Asp96, His153, and Ser257. Ser257 acts as the Schiff-base intermediate with substrate; via pyruvic acid; for decarboxylase activity in catalysis. Position 257 is a pyruvic acid (Ser); by autocatalysis (Ser257).

It belongs to the phosphatidylserine decarboxylase family. PSD-B subfamily. Prokaryotic type I sub-subfamily. In terms of assembly, heterodimer of a large membrane-associated beta subunit and a small pyruvoyl-containing alpha subunit. The cofactor is pyruvate. Is synthesized initially as an inactive proenzyme. Formation of the active enzyme involves a self-maturation process in which the active site pyruvoyl group is generated from an internal serine residue via an autocatalytic post-translational modification. Two non-identical subunits are generated from the proenzyme in this reaction, and the pyruvate is formed at the N-terminus of the alpha chain, which is derived from the carboxyl end of the proenzyme. The autoendoproteolytic cleavage occurs by a canonical serine protease mechanism, in which the side chain hydroxyl group of the serine supplies its oxygen atom to form the C-terminus of the beta chain, while the remainder of the serine residue undergoes an oxidative deamination to produce ammonia and the pyruvoyl prosthetic group on the alpha chain. During this reaction, the Ser that is part of the protease active site of the proenzyme becomes the pyruvoyl prosthetic group, which constitutes an essential element of the active site of the mature decarboxylase.

The protein localises to the cell membrane. The enzyme catalyses a 1,2-diacyl-sn-glycero-3-phospho-L-serine + H(+) = a 1,2-diacyl-sn-glycero-3-phosphoethanolamine + CO2. It participates in phospholipid metabolism; phosphatidylethanolamine biosynthesis; phosphatidylethanolamine from CDP-diacylglycerol: step 2/2. Functionally, catalyzes the formation of phosphatidylethanolamine (PtdEtn) from phosphatidylserine (PtdSer). The protein is Phosphatidylserine decarboxylase proenzyme of Haemophilus influenzae (strain 86-028NP).